The sequence spans 426 residues: Glutamate-1-semialdehyde 2,1-aminomutase (426 aa).

Position 265 is an N6-(pyridoxal phosphate)lysine (Lys265).

The protein belongs to the class-III pyridoxal-phosphate-dependent aminotransferase family. HemL subfamily. In terms of assembly, homodimer. The cofactor is pyridoxal 5'-phosphate.

Its subcellular location is the cytoplasm. The enzyme catalyses (S)-4-amino-5-oxopentanoate = 5-aminolevulinate. It functions in the pathway porphyrin-containing compound metabolism; protoporphyrin-IX biosynthesis; 5-aminolevulinate from L-glutamyl-tRNA(Glu): step 2/2. This chain is Glutamate-1-semialdehyde 2,1-aminomutase, found in Salmonella arizonae (strain ATCC BAA-731 / CDC346-86 / RSK2980).